Here is a 140-residue protein sequence, read N- to C-terminus: ATP synthase epsilon chain (140 aa).

Belongs to the ATPase epsilon chain family. F-type ATPases have 2 components, CF(1) - the catalytic core - and CF(0) - the membrane proton channel. CF(1) has five subunits: alpha(3), beta(3), gamma(1), delta(1), epsilon(1). CF(0) has three main subunits: a, b and c.

It localises to the cell inner membrane. In terms of biological role, produces ATP from ADP in the presence of a proton gradient across the membrane. This chain is ATP synthase epsilon chain, found in Neisseria gonorrhoeae (strain ATCC 700825 / FA 1090).